The sequence spans 177 residues: ATP synthase subunit delta (177 aa).

The protein belongs to the ATPase delta chain family. F-type ATPases have 2 components, F(1) - the catalytic core - and F(0) - the membrane proton channel. F(1) has five subunits: alpha(3), beta(3), gamma(1), delta(1), epsilon(1). F(0) has three main subunits: a(1), b(2) and c(10-14). The alpha and beta chains form an alternating ring which encloses part of the gamma chain. F(1) is attached to F(0) by a central stalk formed by the gamma and epsilon chains, while a peripheral stalk is formed by the delta and b chains.

The protein resides in the cell membrane. In terms of biological role, f(1)F(0) ATP synthase produces ATP from ADP in the presence of a proton or sodium gradient. F-type ATPases consist of two structural domains, F(1) containing the extramembraneous catalytic core and F(0) containing the membrane proton channel, linked together by a central stalk and a peripheral stalk. During catalysis, ATP synthesis in the catalytic domain of F(1) is coupled via a rotary mechanism of the central stalk subunits to proton translocation. Functionally, this protein is part of the stalk that links CF(0) to CF(1). It either transmits conformational changes from CF(0) to CF(1) or is implicated in proton conduction. This Buchnera aphidicola subsp. Acyrthosiphon pisum (strain 5A) protein is ATP synthase subunit delta.